Here is a 243-residue protein sequence, read N- to C-terminus: Venom nerve growth factor 3 (243 aa).

The first 18 residues, 1 to 18 (MSMLCYTLIIAFLIGIWA), serve as a signal peptide directing secretion. A propeptide spanning residues 19-125 (APKSEDNVPL…ALNRNIRAKR (107 aa)) is cleaved from the precursor. A compositionally biased stretch (basic and acidic residues) spans 47 to 66 (GLKTSRNTDQRHPAPKKAED). Residues 47 to 67 (GLKTSRNTDQRHPAPKKAEDQ) form a disordered region. 3 disulfides stabilise this stretch: Cys-139/Cys-204, Cys-182/Cys-232, and Cys-192/Cys-234. N-linked (GlcNAc...) asparagine glycosylation is found at Asn-148 and Asn-151.

This sequence belongs to the NGF-beta family. As to quaternary structure, homodimer; non-covalently linked. In terms of tissue distribution, expressed by the venom gland.

The protein resides in the secreted. Its function is as follows. Nerve growth factor is important for the development and maintenance of the sympathetic and sensory nervous systems. It stimulates division and differentiation of sympathetic and embryonic sensory neurons as well as basal forebrain cholinergic neurons in the brain. Its relevance in the snake venom is not clear. However, it has been shown to inhibit metalloproteinase-dependent proteolysis of platelet glycoprotein Ib alpha, suggesting a metalloproteinase inhibition to prevent metalloprotease autodigestion and/or protection against prey proteases. Binds a lipid between the two protein chains in the homodimer. The lipid-bound form promotes histamine relase from mouse mast cells, contrary to the lipid-free form. This Tropidechis carinatus (Australian rough-scaled snake) protein is Venom nerve growth factor 3.